We begin with the raw amino-acid sequence, 177 residues long: Peptide deformylase (177 aa).

Fe cation is bound by residues C99 and H141. E142 is a catalytic residue. H145 contacts Fe cation.

The protein belongs to the polypeptide deformylase family. Fe(2+) is required as a cofactor.

The enzyme catalyses N-terminal N-formyl-L-methionyl-[peptide] + H2O = N-terminal L-methionyl-[peptide] + formate. Functionally, removes the formyl group from the N-terminal Met of newly synthesized proteins. Requires at least a dipeptide for an efficient rate of reaction. N-terminal L-methionine is a prerequisite for activity but the enzyme has broad specificity at other positions. This chain is Peptide deformylase, found in Rhizorhabdus wittichii (strain DSM 6014 / CCUG 31198 / JCM 15750 / NBRC 105917 / EY 4224 / RW1) (Sphingomonas wittichii).